The chain runs to 170 residues: Ubiquitin-conjugating enzyme E2 G1 (170 aa).

Residue methionine 1 is modified to N-acetylmethionine. Threonine 2 is modified (N-acetylthreonine; in Ubiquitin-conjugating enzyme E2 G1, N-terminally processed). The region spanning 5–166 (QSALLLRRQL…VARCVRKSQE (162 aa)) is the UBC core domain. The Glycyl thioester intermediate role is filled by cysteine 90.

It belongs to the ubiquitin-conjugating enzyme family. Post-translationally, autoubiquitinated.

It catalyses the reaction S-ubiquitinyl-[E1 ubiquitin-activating enzyme]-L-cysteine + [E2 ubiquitin-conjugating enzyme]-L-cysteine = [E1 ubiquitin-activating enzyme]-L-cysteine + S-ubiquitinyl-[E2 ubiquitin-conjugating enzyme]-L-cysteine.. It functions in the pathway protein modification; protein ubiquitination. Functionally, accepts ubiquitin from the E1 complex and catalyzes its covalent attachment to other proteins. In vitro catalyzes 'Lys-48'-, as well as 'Lys-63'-linked polyubiquitination. May be involved in degradation of muscle-specific proteins. Mediates polyubiquitination of CYP3A4. In Macaca fascicularis (Crab-eating macaque), this protein is Ubiquitin-conjugating enzyme E2 G1 (UBE2G1).